The primary structure comprises 372 residues: Glutamate 5-kinase (372 aa).

Lys14 is an ATP binding site. Substrate-binding residues include Ser54, Asp141, and Asn153. Residue 173 to 174 (TD) coordinates ATP. A PUA domain is found at 280 to 358 (RGHVVIDAGA…GEIETVLGYM (79 aa)).

Belongs to the glutamate 5-kinase family.

Its subcellular location is the cytoplasm. The enzyme catalyses L-glutamate + ATP = L-glutamyl 5-phosphate + ADP. It functions in the pathway amino-acid biosynthesis; L-proline biosynthesis; L-glutamate 5-semialdehyde from L-glutamate: step 1/2. Functionally, catalyzes the transfer of a phosphate group to glutamate to form L-glutamate 5-phosphate. The polypeptide is Glutamate 5-kinase (Burkholderia ambifaria (strain ATCC BAA-244 / DSM 16087 / CCUG 44356 / LMG 19182 / AMMD) (Burkholderia cepacia (strain AMMD))).